A 116-amino-acid chain; its full sequence is Large ribosomal subunit protein bL17 (116 aa).

Belongs to the bacterial ribosomal protein bL17 family. In terms of assembly, part of the 50S ribosomal subunit. Contacts protein L32.

In Prochlorococcus marinus (strain MIT 9215), this protein is Large ribosomal subunit protein bL17.